Here is a 175-residue protein sequence, read N- to C-terminus: Adenine phosphoribosyltransferase (175 aa).

It belongs to the purine/pyrimidine phosphoribosyltransferase family. As to quaternary structure, homodimer.

The protein localises to the cytoplasm. It carries out the reaction AMP + diphosphate = 5-phospho-alpha-D-ribose 1-diphosphate + adenine. Its pathway is purine metabolism; AMP biosynthesis via salvage pathway; AMP from adenine: step 1/1. Its function is as follows. Catalyzes a salvage reaction resulting in the formation of AMP, that is energically less costly than de novo synthesis. The polypeptide is Adenine phosphoribosyltransferase (Lacticaseibacillus paracasei (strain ATCC 334 / BCRC 17002 / CCUG 31169 / CIP 107868 / KCTC 3260 / NRRL B-441) (Lactobacillus paracasei)).